Here is a 118-residue protein sequence, read N- to C-terminus: Large ribosomal subunit protein uL18 (118 aa).

Belongs to the universal ribosomal protein uL18 family. In terms of assembly, part of the 50S ribosomal subunit; part of the 5S rRNA/L5/L18/L25 subcomplex. Contacts the 5S and 23S rRNAs.

Its function is as follows. This is one of the proteins that bind and probably mediate the attachment of the 5S RNA into the large ribosomal subunit, where it forms part of the central protuberance. In Brachyspira hyodysenteriae (strain ATCC 49526 / WA1), this protein is Large ribosomal subunit protein uL18.